The chain runs to 242 residues: uncharacterized protein (242 aa).

The segment covering 57–67 (SPTSQKTSASG) has biased composition (polar residues). The disordered stretch occupies residues 57–78 (SPTSQKTSASGQEEPDPLHDKS). The DUF1279 domain occupies 76-188 (DKSSGLIQRF…GYMSTPPPVK (113 aa)). A helical transmembrane segment spans residues 92-114 (YGKVMIPVHLLTSTMWFGTFYYA). Residues 188–237 (KEYLQEKMEETKERISGKMEETKDRFSERMEETKDKFNEKLQETKDKVSF) adopt a coiled-coil conformation. The span at 198–236 (TKERISGKMEETKDRFSERMEETKDKFNEKLQETKDKVS) shows a compositional bias: basic and acidic residues. The tract at residues 198-242 (TKERISGKMEETKDRFSERMEETKDKFNEKLQETKDKVSFRKKKE) is disordered.

Its subcellular location is the membrane. This is an uncharacterized protein from Danio rerio (Zebrafish).